Here is a 468-residue protein sequence, read N- to C-terminus: UDP-N-acetylmuramoylalanine--D-glutamate ligase (468 aa).

Position 127–133 (127–133) interacts with ATP; that stretch reads GTNGKTT.

This sequence belongs to the MurCDEF family.

It is found in the cytoplasm. The enzyme catalyses UDP-N-acetyl-alpha-D-muramoyl-L-alanine + D-glutamate + ATP = UDP-N-acetyl-alpha-D-muramoyl-L-alanyl-D-glutamate + ADP + phosphate + H(+). It participates in cell wall biogenesis; peptidoglycan biosynthesis. Its function is as follows. Cell wall formation. Catalyzes the addition of glutamate to the nucleotide precursor UDP-N-acetylmuramoyl-L-alanine (UMA). In Prochlorococcus marinus (strain MIT 9312), this protein is UDP-N-acetylmuramoylalanine--D-glutamate ligase.